We begin with the raw amino-acid sequence, 314 residues long: 4-hydroxy-3-methylbut-2-enyl diphosphate reductase (314 aa).

Position 12 (cysteine 12) interacts with [4Fe-4S] cluster. (2E)-4-hydroxy-3-methylbut-2-enyl diphosphate-binding residues include histidine 41 and histidine 74. Histidine 41 and histidine 74 together coordinate dimethylallyl diphosphate. Residues histidine 41 and histidine 74 each contribute to the isopentenyl diphosphate site. Cysteine 96 provides a ligand contact to [4Fe-4S] cluster. Histidine 124 is a (2E)-4-hydroxy-3-methylbut-2-enyl diphosphate binding site. Histidine 124 contributes to the dimethylallyl diphosphate binding site. Residue histidine 124 coordinates isopentenyl diphosphate. The active-site Proton donor is glutamate 126. (2E)-4-hydroxy-3-methylbut-2-enyl diphosphate is bound at residue threonine 167. Cysteine 197 serves as a coordination point for [4Fe-4S] cluster. Residues serine 225, serine 226, asparagine 227, and serine 269 each coordinate (2E)-4-hydroxy-3-methylbut-2-enyl diphosphate. Dimethylallyl diphosphate-binding residues include serine 225, serine 226, asparagine 227, and serine 269. Isopentenyl diphosphate contacts are provided by serine 225, serine 226, asparagine 227, and serine 269.

It belongs to the IspH family. [4Fe-4S] cluster is required as a cofactor.

The catalysed reaction is isopentenyl diphosphate + 2 oxidized [2Fe-2S]-[ferredoxin] + H2O = (2E)-4-hydroxy-3-methylbut-2-enyl diphosphate + 2 reduced [2Fe-2S]-[ferredoxin] + 2 H(+). The enzyme catalyses dimethylallyl diphosphate + 2 oxidized [2Fe-2S]-[ferredoxin] + H2O = (2E)-4-hydroxy-3-methylbut-2-enyl diphosphate + 2 reduced [2Fe-2S]-[ferredoxin] + 2 H(+). It functions in the pathway isoprenoid biosynthesis; dimethylallyl diphosphate biosynthesis; dimethylallyl diphosphate from (2E)-4-hydroxy-3-methylbutenyl diphosphate: step 1/1. Its pathway is isoprenoid biosynthesis; isopentenyl diphosphate biosynthesis via DXP pathway; isopentenyl diphosphate from 1-deoxy-D-xylulose 5-phosphate: step 6/6. Functionally, catalyzes the conversion of 1-hydroxy-2-methyl-2-(E)-butenyl 4-diphosphate (HMBPP) into a mixture of isopentenyl diphosphate (IPP) and dimethylallyl diphosphate (DMAPP). Acts in the terminal step of the DOXP/MEP pathway for isoprenoid precursor biosynthesis. This Actinobacillus succinogenes (strain ATCC 55618 / DSM 22257 / CCUG 43843 / 130Z) protein is 4-hydroxy-3-methylbut-2-enyl diphosphate reductase.